The following is a 91-amino-acid chain: UPF0250 protein NGO_0791 (91 aa).

This sequence belongs to the UPF0250 family.

This Neisseria gonorrhoeae (strain ATCC 700825 / FA 1090) protein is UPF0250 protein NGO_0791.